The following is a 520-amino-acid chain: Cholesterol side-chain cleavage enzyme, mitochondrial (520 aa).

Residues 1 to 39 (MLARGLPFRSALVKACPPLLNTGREGWGHHRVGTGEGAG) constitute a mitochondrion transit peptide. The tract at residues 27-47 (WGHHRVGTGEGAGISTRTPRP) is disordered. Residue Cys-461 participates in heme binding.

Belongs to the cytochrome P450 family. As to quaternary structure, interacts with FDX1/adrenodoxin. It depends on heme as a cofactor.

It is found in the mitochondrion inner membrane. The catalysed reaction is 6 reduced [adrenodoxin] + cholesterol + 3 O2 + 6 H(+) = 4-methylpentanal + pregnenolone + 6 oxidized [adrenodoxin] + 4 H2O. It carries out the reaction 2 reduced [adrenodoxin] + cholesterol + O2 + 2 H(+) = (22R)-hydroxycholesterol + 2 oxidized [adrenodoxin] + H2O. It catalyses the reaction (22R)-hydroxycholesterol + 2 reduced [adrenodoxin] + O2 + 2 H(+) = (20R,22R)-20,22-dihydroxycholesterol + 2 oxidized [adrenodoxin] + H2O. The enzyme catalyses (20R,22R)-20,22-dihydroxycholesterol + 2 reduced [adrenodoxin] + O2 + 2 H(+) = 4-methylpentanal + pregnenolone + 2 oxidized [adrenodoxin] + 2 H2O. It participates in lipid metabolism; C21-steroid hormone metabolism. The protein operates within steroid metabolism; cholesterol metabolism. In terms of biological role, a cytochrome P450 monooxygenase that catalyzes the side-chain hydroxylation and cleavage of cholesterol to pregnenolone, the precursor of most steroid hormones. Catalyzes three sequential oxidation reactions of cholesterol, namely the hydroxylation at C22 followed with the hydroxylation at C20 to yield 20R,22R-hydroxycholesterol that is further cleaved between C20 and C22 to yield the C21-steroid pregnenolone and 4-methylpentanal. Mechanistically, uses molecular oxygen inserting one oxygen atom into a substrate and reducing the second into a water molecule. Two electrons are provided by NADPH via a two-protein mitochondrial transfer system comprising flavoprotein FDXR (adrenodoxin/ferredoxin reductase) and nonheme iron-sulfur protein FDX1 or FDX2 (adrenodoxin/ferredoxin). The polypeptide is Cholesterol side-chain cleavage enzyme, mitochondrial (Ovis aries (Sheep)).